The chain runs to 60 residues: Large ribosomal subunit protein bL32 (60 aa).

Over residues 1 to 20 (MAVQKSRKSRSRRDMRRSHH) the composition is skewed to basic residues. Residues 1–60 (MAVQKSRKSRSRRDMRRSHHHMEVAELSIDATTGEKHRRHHMTKDGFYRGRQLFKASQED) are disordered.

The protein belongs to the bacterial ribosomal protein bL32 family.

The sequence is that of Large ribosomal subunit protein bL32 from Psychrobacter sp. (strain PRwf-1).